A 456-amino-acid polypeptide reads, in one-letter code: Cysteine--tRNA ligase (456 aa).

Cysteine 30 is a Zn(2+) binding site. The short motif at 32 to 42 is the 'HIGH' region element; sequence MTVYDFCHIGH. The Zn(2+) site is built by cysteine 211, histidine 236, and glutamate 240. Positions 268 to 272 match the 'KMSKS' region motif; it reads KMSKS. Lysine 271 contributes to the ATP binding site.

The protein belongs to the class-I aminoacyl-tRNA synthetase family. In terms of assembly, monomer. Zn(2+) serves as cofactor.

It is found in the cytoplasm. The enzyme catalyses tRNA(Cys) + L-cysteine + ATP = L-cysteinyl-tRNA(Cys) + AMP + diphosphate. The polypeptide is Cysteine--tRNA ligase (Dichelobacter nodosus (strain VCS1703A)).